Consider the following 510-residue polypeptide: 2,3-bisphosphoglycerate-independent phosphoglycerate mutase (510 aa).

Residues aspartate 13 and serine 63 each coordinate Mn(2+). Serine 63 functions as the Phosphoserine intermediate in the catalytic mechanism. Residues histidine 124, 154–155 (RD), arginine 186, arginine 192, 262–265 (RADR), and lysine 334 each bind substrate. Residues aspartate 401, histidine 405, aspartate 442, histidine 443, and histidine 461 each contribute to the Mn(2+) site.

This sequence belongs to the BPG-independent phosphoglycerate mutase family. In terms of assembly, monomer. Mn(2+) is required as a cofactor.

The enzyme catalyses (2R)-2-phosphoglycerate = (2R)-3-phosphoglycerate. The protein operates within carbohydrate degradation; glycolysis; pyruvate from D-glyceraldehyde 3-phosphate: step 3/5. Functionally, catalyzes the interconversion of 2-phosphoglycerate and 3-phosphoglycerate. The protein is 2,3-bisphosphoglycerate-independent phosphoglycerate mutase of Vibrio atlanticus (strain LGP32) (Vibrio splendidus (strain Mel32)).